The sequence spans 385 residues: MKLVFSALASLLSGASATIYYAGVAESSGEFGVWSATQTPGTGLPGRFGVDYAFISEAAVDVHVDQNHLNLFRVAFLLERMCPPATGLGAAFNETHFDYFKEAVDYITVTKGAYAILDPHNYMRYNDPSYQPFSGSVIGNTSDSTAATTEQFGEFWGELASRFNDNERVIFGLMNEPHDMATSLVLANNQAAIDAIRAANASNLIIMPGNSWTGGHSWTEGSDPSSALLNQFKDPLNNTAIDIHEYLDYDFSGGHLECVSDPETNLAALTAWLKENNLKAFITEFGGSNSTSCQEMLPDLINYMADNAEYIGWTAWAAGPFWGPNSPCCTNSTQLGSLEPGSTAVDGSPGLYDTVWLPVIQPLVPTELQWSGPASISGGELTSRA.

Positions 1–17 (MKLVFSALASLLSGASA) are cleaved as a signal peptide. 2 N-linked (GlcNAc...) asparagine glycosylation sites follow: asparagine 93 and asparagine 140. Glutamate 176 functions as the Proton donor in the catalytic mechanism. Asparagine 200 and asparagine 237 each carry an N-linked (GlcNAc...) asparagine glycan. Glutamate 284 functions as the Nucleophile in the catalytic mechanism. Residues asparagine 289 and asparagine 331 are each glycosylated (N-linked (GlcNAc...) asparagine).

Belongs to the glycosyl hydrolase 5 (cellulase A) family.

The enzyme catalyses Endohydrolysis of (1-&gt;4)-beta-D-glucosidic linkages in cellulose, lichenin and cereal beta-D-glucans.. Its pathway is glycan metabolism; cellulose degradation. Active towards carboxymethyl cellulose. This is Endoglucanase 1 (eg 1) from Robillarda sp. (strain Y-20).